The primary structure comprises 320 residues: PUP1 protein homolog (320 aa).

2 helical membrane-spanning segments follow: residues 66–85 (MWGGWLGFSAVFLTPFAYRY) and 100–119 (FVLGVMALFFATNFAGRSMY). The tract at residues 205 to 320 (GGVFNGSPFM…QSGRYGGNRS (116 aa)) is disordered. Ser230 carries the post-translational modification Phosphoserine. Polar residues predominate over residues 253–266 (GDNSSSSSWENIRN). Positions 267–284 (TSRDQSQESDASVDHESD) are enriched in basic and acidic residues.

This sequence belongs to the PUP1 family.

Its subcellular location is the mitochondrion membrane. This chain is PUP1 protein homolog, found in Saccharomyces cerevisiae (strain ATCC 204508 / S288c) (Baker's yeast).